Reading from the N-terminus, the 373-residue chain is Indole glucosinolate O-methyltransferase 1 (373 aa).

Gly-217, Asp-240, Asp-260, Met-261, and Lys-274 together coordinate S-adenosyl-L-homocysteine. Catalysis depends on His-278, which acts as the Proton acceptor.

Belongs to the class I-like SAM-binding methyltransferase superfamily. Cation-independent O-methyltransferase family. Interacts with B'GAMMA.

The protein operates within secondary metabolite biosynthesis. Functionally, involved in indole glucosinolate biosynthesis. Catalyzes methoxylation reactions of the glucosinolate indole ring. Converts the hydroxy intermediates 4-hydroxy-indol-3-yl-methylglucosinolate (4OH-I3M) and 1-hydroxy-indol-3-yl-methylglucosinolate (1OH-I3M) to 4-methoxy-indol-3-yl-methylglucosinolate (4MO-I3M) and 1-methoxy-indol-3-yl-methylglucosinolate (1MO-I3M), respectively. This chain is Indole glucosinolate O-methyltransferase 1, found in Arabidopsis thaliana (Mouse-ear cress).